The chain runs to 312 residues: Ribosomal RNA small subunit methyltransferase H (312 aa).

S-adenosyl-L-methionine is bound by residues 33–35, Asp53, Phe80, Asp101, and Gln108; that span reads GGH.

Belongs to the methyltransferase superfamily. RsmH family.

It localises to the cytoplasm. The enzyme catalyses cytidine(1402) in 16S rRNA + S-adenosyl-L-methionine = N(4)-methylcytidine(1402) in 16S rRNA + S-adenosyl-L-homocysteine + H(+). Functionally, specifically methylates the N4 position of cytidine in position 1402 (C1402) of 16S rRNA. The polypeptide is Ribosomal RNA small subunit methyltransferase H (Desulfosudis oleivorans (strain DSM 6200 / JCM 39069 / Hxd3) (Desulfococcus oleovorans)).